A 205-amino-acid polypeptide reads, in one-letter code: Protein Rcp (205 aa).

This sequence belongs to the NAD(P)-dependent epimerase/dehydratase family.

In Vibrio cholerae serotype O1 (strain ATCC 39315 / El Tor Inaba N16961), this protein is Protein Rcp (rcp).